We begin with the raw amino-acid sequence, 88 residues long: Small ribosomal subunit protein bS20 (88 aa).

Residues 1 to 27 (MANSKSAKKRALQSEKRRQHNASRRSM) are disordered.

This sequence belongs to the bacterial ribosomal protein bS20 family.

Its function is as follows. Binds directly to 16S ribosomal RNA. In Shewanella oneidensis (strain ATCC 700550 / JCM 31522 / CIP 106686 / LMG 19005 / NCIMB 14063 / MR-1), this protein is Small ribosomal subunit protein bS20.